A 696-amino-acid chain; its full sequence is MIEQNKHQQLRIGLASPEQICAWSEKILPNGEIVGQVTKPYTLHYETNKPERDGSFCERIFGPIKSRVCACGNSPGIGNEKIDSKFCTQCGVEFVDSRIRRYQMGYIKLACPVVHVWYLKRLPSYIANLLAKTRKELEGPVYCDLFLARPIAKKPTLLRSRGTFNYEIQSWKDIIPHYLSARPHYLFARGSGTFKEREIATGGDAIGEQLTGLDLQMIIDRSHMEWKNLVELKWNRLEENQESTVDRWEDEKIRRRKDFLVGRIKLAKHFLRTNIEPKWMVLCLLPVLPPEPRPIVQLGEGGLITSSDLNELYRRVINRNNTLTNLLARSGSESFVICQKKLIQEAVDALLDNGICGQPMRDSHDRPYKSFSDVIEGKEGRFRENLLGKRVDYSGRSVIVVGPFLSLYQCGLPSEIAIELFQAFVIRSLIGRHIAPNLRAAKSMIRDKGPIVWEVLQEVMQGHPVLLNRAPTLHKLGIQAFQPILVEGRAIRLHPSVCGGFNADFDGDQMAVHVPLSLEARAEARLLMFSETNLLSPAIGDPISIPTQDMLLGLYISTVENSQGIYGNRYHPYHSEKKSFSCKKPSFYSYDDVLRAYRQKRIDLYSPLWLRWGELDLRIITSVNQEAPIEVQYESLGTFHEIHEHYRIRKGRMGEILNIYIRTTVGRTRFNREMEEAIQGFACFEHPKKSLPALRI.

Zn(2+)-binding residues include cysteine 69, cysteine 71, cysteine 87, and cysteine 90. Aspartate 504, aspartate 506, and aspartate 508 together coordinate Mg(2+).

Belongs to the RNA polymerase beta' chain family. RpoC1 subfamily. As to quaternary structure, in plastids the minimal PEP RNA polymerase catalytic core is composed of four subunits: alpha, beta, beta', and beta''. When a (nuclear-encoded) sigma factor is associated with the core the holoenzyme is formed, which can initiate transcription. The cofactor is Mg(2+). Zn(2+) serves as cofactor.

Its subcellular location is the plastid. It is found in the chloroplast. The enzyme catalyses RNA(n) + a ribonucleoside 5'-triphosphate = RNA(n+1) + diphosphate. In terms of biological role, DNA-dependent RNA polymerase catalyzes the transcription of DNA into RNA using the four ribonucleoside triphosphates as substrates. This is DNA-directed RNA polymerase subunit beta' from Pinus koraiensis (Korean pine).